Consider the following 460-residue polypeptide: NADH-ubiquinone oxidoreductase chain 4 (460 aa).

Helical transmembrane passes span 22 to 42 (WLWP…ITWL), 61 to 81 (PLST…LLAS), 94 to 113 (RMYI…AFGA), 117 to 139 (IMFY…RWGN), 148 to 168 (TYFL…LLML), 195 to 217 (IWWA…HLWL), 225 to 245 (PVAG…YGMM), 258 to 278 (MVYP…SICL), 285 to 304 (SLIA…GILI), 308 to 330 (WGFT…LFCL), 351 to 371 (IALP…LALP), 394 to 414 (LILT…MFLM), and 436 to 456 (LLMA…ALLW).

It belongs to the complex I subunit 4 family.

The protein resides in the mitochondrion membrane. It catalyses the reaction a ubiquinone + NADH + 5 H(+)(in) = a ubiquinol + NAD(+) + 4 H(+)(out). Core subunit of the mitochondrial membrane respiratory chain NADH dehydrogenase (Complex I) that is believed to belong to the minimal assembly required for catalysis. Complex I functions in the transfer of electrons from NADH to the respiratory chain. The immediate electron acceptor for the enzyme is believed to be ubiquinone. The protein is NADH-ubiquinone oxidoreductase chain 4 (MT-ND4) of Gadus morhua (Atlantic cod).